The following is a 462-amino-acid chain: tRNA modification GTPase MnmE (462 aa).

Positions 27, 89, and 128 each coordinate (6S)-5-formyl-5,6,7,8-tetrahydrofolate. The TrmE-type G domain maps to 224–383; sequence GLATAIVGRP…LEAQIAKLFF (160 aa). Residue Asn-234 participates in K(+) binding. GTP contacts are provided by residues 234-239, 253-259, and 278-281; these read NVGKSS, TDVAGTT, and DTAG. Ser-238 is a binding site for Mg(2+). Residues Thr-253, Val-255, and Thr-258 each contribute to the K(+) site. Thr-259 contacts Mg(2+). Lys-462 provides a ligand contact to (6S)-5-formyl-5,6,7,8-tetrahydrofolate.

Belongs to the TRAFAC class TrmE-Era-EngA-EngB-Septin-like GTPase superfamily. TrmE GTPase family. As to quaternary structure, homodimer. Heterotetramer of two MnmE and two MnmG subunits. Requires K(+) as cofactor.

It is found in the cytoplasm. In terms of biological role, exhibits a very high intrinsic GTPase hydrolysis rate. Involved in the addition of a carboxymethylaminomethyl (cmnm) group at the wobble position (U34) of certain tRNAs, forming tRNA-cmnm(5)s(2)U34. The sequence is that of tRNA modification GTPase MnmE from Latilactobacillus sakei subsp. sakei (strain 23K) (Lactobacillus sakei subsp. sakei).